We begin with the raw amino-acid sequence, 117 residues long: Large ribosomal subunit protein bL19 (117 aa).

The protein belongs to the bacterial ribosomal protein bL19 family.

This protein is located at the 30S-50S ribosomal subunit interface and may play a role in the structure and function of the aminoacyl-tRNA binding site. The sequence is that of Large ribosomal subunit protein bL19 from Desulfosudis oleivorans (strain DSM 6200 / JCM 39069 / Hxd3) (Desulfococcus oleovorans).